Here is a 440-residue protein sequence, read N- to C-terminus: Chromosome partition protein MukF (440 aa).

The leucine-zipper stretch occupies residues 208–236; that stretch reads LSETSGTLRELQDTLDAAGDKLQANLLRI.

Belongs to the MukF family. As to quaternary structure, interacts, and probably forms a ternary complex, with MukE and MukB via its C-terminal region. The complex formation is stimulated by calcium or magnesium. It is required for an interaction between MukE and MukB.

The protein localises to the cytoplasm. The protein resides in the nucleoid. In terms of biological role, involved in chromosome condensation, segregation and cell cycle progression. May participate in facilitating chromosome segregation by condensation DNA from both sides of a centrally located replisome during cell division. Not required for mini-F plasmid partitioning. Probably acts via its interaction with MukB and MukE. Overexpression results in anucleate cells. It has a calcium binding activity. The sequence is that of Chromosome partition protein MukF from Klebsiella pneumoniae (strain 342).